A 33-amino-acid polypeptide reads, in one-letter code: Vejocalcin (33 aa).

Intrachain disulfides connect C3-C17, C10-C21, and C16-C32. Positions 23–24 (RR) are essential for stimulation of [3H]ryanodine binding to RYR1.

Expressed by the venom gland.

It is found in the secreted. This toxin stabilizes ryanodine receptor 1 (RyR1) opening in a long-lasting subconductance state (60% of the full conductance state). Furthermore, it triggers calcium release from sarcoplasmic vesicles (31 nM are enough to induce a sharp release, and 65% of the total calcium is released after toxin (100 nM) addition) probably by acting as a cell-penetrating peptide (CPP). In addition, it has been shown to dose-dependently stimulate ryanodine binding to RyR1 (EC(50)=3.7 nM). It also augments the bell-shaped calcium-[3H]ryanodine binding curve that is maximal at about 10 uM calcium concentration. It binds a different site as ryanodine. It acts synergistically with caffeine. In vivo, intracerebroventricular injection into mice induces neurotoxic symptoms, followed by death. The polypeptide is Vejocalcin (Vaejovis mexicanus (Mexican scorpion)).